Here is a 645-residue protein sequence, read N- to C-terminus: Sodium-dependent phosphate transporter 2 (645 aa).

Topologically, residues 1-5 (MAMDE) are extracellular. The chain crosses the membrane as a helical span at residues 6–26 (YLWMVILGFIIAFILAFSVGA). Topologically, residues 27–46 (NDVANSFGTAVGSGVVTLRQ) are cytoplasmic. A helical membrane pass occupies residues 47–67 (ACILASIFETTGSVLLGAKVG). At 68 to 86 (ETIRKGIIDVNLYNNTVET) the chain is on the extracellular side. Asn-81 carries an N-linked (GlcNAc...) asparagine glycan. A helical membrane pass occupies residues 87–107 (LMAGEVSAMVGSAVWQLIASF). Over 108–109 (LR) the chain is Cytoplasmic. The chain crosses the membrane as a helical span at residues 110 to 130 (FPISGTHCIVGATIGFSLVAI). Residues 131 to 142 (GTQGVQWMELVK) lie on the Extracellular side of the membrane. The helical transmembrane segment at 143-163 (IVASWFISPLLSGFMSGVLFV) threads the bilayer. The Cytoplasmic portion of the chain corresponds to 164-190 (LIRMFILKKEDPVPNGLRALPVFYAAT). The chain crosses the membrane as a helical span at residues 191-211 (IAINVFSIMYTGAPVMGLVLP). The Extracellular portion of the chain corresponds to 212–213 (MW). The helical transmembrane segment at 214–234 (AIALISFGVALLFALFVWLFV) threads the bilayer. Residues 235-475 (CPWMRRKITG…EEKEEKDSPE (241 aa)) are Cytoplasmic-facing. Phosphoserine occurs at positions 253, 256, 259, 268, 316, and 379. The segment at 275 to 320 (PGAKAHDDSTVPLTGSAADPSGTSESMSGGHHPRAPYGRALSMTHG) is disordered. The disordered stretch occupies residues 448–471 (RLAPPLAEPEPPRDDPADEEKEEK). Residues 476 to 496 (VHLLFHFLQVLTACFGSFAHG) form a helical membrane-spanning segment. The Extracellular portion of the chain corresponds to 497 to 523 (GNDVSNAIGPLVALWLIYEQGAVLQEA). The chain crosses the membrane as a helical span at residues 524-544 (ATPVWLLFYGGVGICTGLWVW). The Cytoplasmic segment spans residues 545–564 (GRRVIQTMGKDLTPITPSSG). A helical membrane pass occupies residues 565 to 579 (FTIELASAFTVVIAS). Topologically, residues 580–586 (NIGLPVS) are extracellular. The chain crosses the membrane as a helical span at residues 587 to 602 (TTHCKVGSVVAVGWIR). Residues 603–614 (SRKAVDWRLFRN) lie on the Cytoplasmic side of the membrane. The helical transmembrane segment at 615–635 (IFVAWFVTVPVAGLFSAAIMA) threads the bilayer. The Extracellular segment spans residues 636-645 (LLIHGILPFV).

The protein belongs to the inorganic phosphate transporter (PiT) (TC 2.A.20) family. In terms of assembly, homodimer.

The protein resides in the cell membrane. The protein localises to the apical cell membrane. It catalyses the reaction 2 Na(+)(out) + phosphate(out) = 2 Na(+)(in) + phosphate(in). Its function is as follows. Sodium-phosphate symporter which preferentially transports the monovalent form of phosphate with a stoichiometry of two sodium ions per phosphate ion. Plays a critical role in the determination of bone quality and strength by providing phosphate for bone mineralization. Required to maintain normal cerebrospinal fluid phosphate levels. Mediates phosphate-induced calcification of vascular smooth muscle cells (VCMCs) and can functionally compensate for loss of SLC20A1 in VCMCs. The polypeptide is Sodium-dependent phosphate transporter 2 (SLC20A2) (Bos taurus (Bovine)).